The chain runs to 195 residues: dCTP deaminase (195 aa).

Residues 110 to 115 (RSSLAR), D128, 136 to 138 (VLE), Y171, K178, and Q182 each bind dCTP. E138 acts as the Proton donor/acceptor in catalysis. Residues 169 to 179 (RPYSSRKDAKY) are compositionally biased toward basic and acidic residues. Residues 169 to 195 (RPYSSRKDAKYKNQQSAVASRIDEDKE) form a disordered region.

It belongs to the dCTP deaminase family. As to quaternary structure, homotrimer.

The catalysed reaction is dCTP + H2O + H(+) = dUTP + NH4(+). It functions in the pathway pyrimidine metabolism; dUMP biosynthesis; dUMP from dCTP (dUTP route): step 1/2. In terms of biological role, catalyzes the deamination of dCTP to dUTP. This chain is dCTP deaminase, found in Haemophilus influenzae (strain 86-028NP).